The chain runs to 586 residues: Mitogen-activated protein kinase 15 (586 aa).

Residues Tyr14–Val305 enclose the Protein kinase domain. ATP contacts are provided by residues Leu20–Val28 and Lys43. Asp138 serves as the catalytic Proton acceptor. Disordered stretches follow at residues Gln354–Pro506 and Asn520–Arg539. A compositionally biased stretch (pro residues) spans Pro382–Gln393. Over residues Pro400–Gln414 the composition is skewed to low complexity. Over residues Lys415–Gly439 the composition is skewed to polar residues. The span at Ala452–Gln463 shows a compositional bias: low complexity. Positions Glu464–Ser473 are enriched in basic and acidic residues. Residues Phe484 to Ala498 show a composition bias toward polar residues.

Interacts with dvl2.

Its subcellular location is the cytoplasm. It localises to the cytoskeleton. It is found in the cilium basal body. The protein localises to the cell projection. The protein resides in the cilium. Its subcellular location is the cell junction. It catalyses the reaction L-seryl-[protein] + ATP = O-phospho-L-seryl-[protein] + ADP + H(+). The enzyme catalyses L-threonyl-[protein] + ATP = O-phospho-L-threonyl-[protein] + ADP + H(+). Its function is as follows. Atypical MAPK protein that regulates ciliogenesis by phosphorylating rcsd1 through its binding with dvl2. This chain is Mitogen-activated protein kinase 15, found in Xenopus laevis (African clawed frog).